Reading from the N-terminus, the 915-residue chain is Protein translocase subunit SecA (915 aa).

Residues Gln-87, 105–109 (GEGKT), and Asp-516 each bind ATP. Positions 866-915 (MTYGAPSDGDIGGSVEDEPLELPEGARVGRNDPCPCGSGKKYKQCHGKLS) are disordered. The Zn(2+) site is built by Cys-899, Cys-901, Cys-910, and His-911. Basic residues predominate over residues 905-915 (KKYKQCHGKLS).

Belongs to the SecA family. As to quaternary structure, monomer and homodimer. Part of the essential Sec protein translocation apparatus which comprises SecA, SecYEG and auxiliary proteins SecDF-YajC and YidC. Requires Zn(2+) as cofactor.

The protein resides in the cell inner membrane. The protein localises to the cytoplasm. The catalysed reaction is ATP + H2O + cellular proteinSide 1 = ADP + phosphate + cellular proteinSide 2.. In terms of biological role, part of the Sec protein translocase complex. Interacts with the SecYEG preprotein conducting channel. Has a central role in coupling the hydrolysis of ATP to the transfer of proteins into and across the cell membrane, serving both as a receptor for the preprotein-SecB complex and as an ATP-driven molecular motor driving the stepwise translocation of polypeptide chains across the membrane. In Delftia acidovorans (strain DSM 14801 / SPH-1), this protein is Protein translocase subunit SecA.